Consider the following 413-residue polypeptide: MTSSRVENSSSRAARKVKLALMGPAFVAAIGYIDPGNFATNIQAGASFGYQLLWVVVWANLMAMLIQVLSAKLGIATGKNLAEQIRDHYPRPVVWFYWVQAEIIAMATDLAEFIGAAIGFKLVLGVSLLQGAVLTGVATFLILMLQRRGQKPLEKVIGGLLLFVAVAYVVELIFSQPALAPLTKGLVIPTLPNGEAVFLAAGVLGATIMPHVIYLHSSLTQHLHGGTRKERYNATRWDVAIAMTIAGFVNLAMMATAAAAFHFNGHTGVADLDQAYRTLEPLLSHAAATIFGLSLVAAGLSSTVVGTLAGQVVMQGFIRFHIPLWFRRAVTMLPSFVVILLGLDPTRILVMSQVLLSFGIALALVPLLIFTSNAQLMGDLVNTRWVRVTGWVIVAIVVSLNGWLIVGSLLGVA.

Transmembrane regions (helical) follow at residues 19–39 (LALM…GNFA), 46–66 (ASFG…AMLI), 94–114 (VWFY…AEFI), 122–142 (LVLG…TFLI), 156–176 (VIGG…IFSQ), 196–216 (AVFL…IYLH), 241–261 (IAMT…AAAF), 290–310 (IFGL…TLAG), 329–349 (AVTM…TRIL), 350–370 (VMSQ…LLIF), and 392–412 (VIVA…LLGV).

Belongs to the NRAMP family.

Its subcellular location is the cell inner membrane. Its function is as follows. H(+)-stimulated, divalent metal cation uptake system. The chain is Divalent metal cation transporter MntH from Klebsiella pneumoniae (strain 342).